Reading from the N-terminus, the 149-residue chain is UPF0251 protein Moth_1655 (149 aa).

The segment at 129–149 is disordered; it reads AGRGPGRGRCHRHGRFGEGEH.

Belongs to the UPF0251 family.

The protein is UPF0251 protein Moth_1655 of Moorella thermoacetica (strain ATCC 39073 / JCM 9320).